The primary structure comprises 160 residues: Ribosomal RNA large subunit methyltransferase H (160 aa).

S-adenosyl-L-methionine contacts are provided by residues leucine 76, glycine 108, and 127–132 (LGELTW).

The protein belongs to the RNA methyltransferase RlmH family. As to quaternary structure, homodimer.

The protein resides in the cytoplasm. It catalyses the reaction pseudouridine(1915) in 23S rRNA + S-adenosyl-L-methionine = N(3)-methylpseudouridine(1915) in 23S rRNA + S-adenosyl-L-homocysteine + H(+). In terms of biological role, specifically methylates the pseudouridine at position 1915 (m3Psi1915) in 23S rRNA. This is Ribosomal RNA large subunit methyltransferase H from Brucella anthropi (strain ATCC 49188 / DSM 6882 / CCUG 24695 / JCM 21032 / LMG 3331 / NBRC 15819 / NCTC 12168 / Alc 37) (Ochrobactrum anthropi).